The following is a 124-amino-acid chain: Ragulator complex protein LAMTOR3 (124 aa).

Residues 57 to 70 form a required for interaction with LAMTOR2 region; it reads TDQGSKLGLSKNKS.

Belongs to the LAMTOR3 family. As to quaternary structure, part of the Ragulator complex composed of LAMTOR1, LAMTOR2, LAMTOR3, LAMTOR4 and LAMTOR5. LAMTOR4 and LAMTOR5 form a heterodimer that interacts, through LAMTOR1, with a LAMTOR2, LAMTOR3 heterodimer. Interacts with LAMTOR1 and LAMTOR2; the interaction is direct. The Ragulator complex interacts with both the mTORC1 complex and heterodimers constituted of the Rag GTPases RagA/RRAGA, RagB/RRAGB, RagC/RRAGC and RagD/RRAGD; regulated by amino acid availability. The Ragulator complex interacts with SLC38A9; the probable amino acid sensor. Component of the lysosomal folliculin complex (LFC), composed of FLCN, FNIP1 (or FNIP2), RagA/RRAGA or RagB/RRAGB GDP-bound, RagC/RRAGC or RagD/RRAGD GTP-bound, and Ragulator. Interacts with MAP2K1/MEK1 and MAPK2. Interacts with MORG1.

The protein resides in the late endosome membrane. Functionally, as part of the Ragulator complex it is involved in amino acid sensing and activation of mTORC1, a signaling complex promoting cell growth in response to growth factors, energy levels, and amino acids. Activated by amino acids through a mechanism involving the lysosomal V-ATPase, the Ragulator plays a dual role for the small GTPases Rag (RagA/RRAGA, RagB/RRAGB, RagC/RRAGC and/or RagD/RRAGD): it (1) acts as a guanine nucleotide exchange factor (GEF), activating the small GTPases Rag and (2) mediates recruitment of Rag GTPases to the lysosome membrane. Activated Ragulator and Rag GTPases function as a scaffold recruiting mTORC1 to lysosomes where it is in turn activated. Adapter protein that enhances the efficiency of the MAP kinase cascade facilitating the activation of MAPK2. This chain is Ragulator complex protein LAMTOR3, found in Homo sapiens (Human).